We begin with the raw amino-acid sequence, 309 residues long: Olfactory receptor 1A1 (309 aa).

Residues 1–25 (MRENNQSSTLEFILLGVTGQQEQED) lie on the Extracellular side of the membrane. Asparagine 5 carries an N-linked (GlcNAc...) asparagine glycan. A helical transmembrane segment spans residues 26 to 49 (FFYILFLFIYPITLIGNLLIVLAI). Topologically, residues 50-57 (CSDVHLHN) are cytoplasmic. Residues 58–79 (PMYFLLANLSLVDIFFSSVTIP) form a helical membrane-spanning segment. At 80–100 (KMLANHLSGSKSISFGGCLTQ) the chain is on the extracellular side. Cysteine 97 and cysteine 189 form a disulfide bridge. A helical transmembrane segment spans residues 101–120 (MYFMIDLGNTDSYTLAAMAY). At 121–139 (DRAVAISRPLHYTTIMSPR) the chain is on the cytoplasmic side. A helical transmembrane segment spans residues 140-158 (SCIWLIAGSWVIGNANALP). Over 159-195 (HTLLTASLSFCGNQEVANFYCDITPLLKLSCSDIHFH) the chain is Extracellular. Residues 196–218 (VKMMYLGVGIFSVPLLCIIVSYI) traverse the membrane as a helical segment. The Cytoplasmic portion of the chain corresponds to 219-235 (RVFSTVFQVPSTKGVLK). Residues 236–258 (AFSTCGSHLTVVSLYYGTVMGMY) traverse the membrane as a helical segment. The Extracellular segment spans residues 259 to 270 (FRPLTNYSLKDA). Asparagine 264 carries an N-linked (GlcNAc...) asparagine glycan. The chain crosses the membrane as a helical span at residues 271-290 (VITVMCTAVTPMLNPFIYSL). Residues 291–309 (RNRDMKAALQKLFNKRISS) lie on the Cytoplasmic side of the membrane.

The protein belongs to the G-protein coupled receptor 1 family.

The protein resides in the cell membrane. Odorant receptor. This chain is Olfactory receptor 1A1 (OR1A1), found in Gorilla gorilla gorilla (Western lowland gorilla).